We begin with the raw amino-acid sequence, 203 residues long: Large ribosomal subunit protein bL25 (203 aa).

It belongs to the bacterial ribosomal protein bL25 family. CTC subfamily. In terms of assembly, part of the 50S ribosomal subunit; part of the 5S rRNA/L5/L18/L25 subcomplex. Contacts the 5S rRNA. Binds to the 5S rRNA independently of L5 and L18.

This is one of the proteins that binds to the 5S RNA in the ribosome where it forms part of the central protuberance. The protein is Large ribosomal subunit protein bL25 of Psychromonas ingrahamii (strain DSM 17664 / CCUG 51855 / 37).